The primary structure comprises 334 residues: MSEPIRVLVTGAAGQIAYSLLYSIGNGSVFGKDQPIILVLLDITPMMGVLDGVLMELQDCALPLLKDVIATDKEDVAFKDLDVAILVGSMPRRDGMERKDLLKANVKIFKCQGAALEKYAKKSVKVIVVGNPANTNCLTACKSAPSIPKENFSCLTRLDHNRAKAQIALKLGVTSDDVKNVIIWGNHSSTQYPDVSHAKVKLHGKEVGVYDALKDDSWLKGEFITTVQQRGAAVIKARKLSSAMSAAKAICDHVRDIWFGTPEGEFVSMGIISDGNPYGVPDDLLYSFPVTIKNKTWKVVEGLTINDFSREKMDLTAKELAEEKETAFEFLSSA.

Ser-2 carries the N-acetylserine modification. NAD(+)-binding positions include 11-17 (GAAGQIA) and Asp-42. Residues Arg-92 and Arg-98 each contribute to the substrate site. Asn-105 provides a ligand contact to NAD(+). Lys-110 bears the N6-succinyllysine mark. Gln-112 contributes to the NAD(+) binding site. An N6-acetyllysine mark is found at Lys-118 and Lys-121. NAD(+) is bound at residue 129 to 131 (VGN). The substrate site is built by Asn-131 and Arg-162. The Proton acceptor role is filled by His-187. Lys-214 bears the N6-succinyllysine mark. A Phosphoserine modification is found at Ser-217. Residue Arg-230 is modified to Omega-N-methylarginine. Ser-241 is modified (phosphoserine). The residue at position 298 (Lys-298) is an N6-acetyllysine; alternate. Lys-298 is modified (N6-succinyllysine; alternate). At Ser-309 the chain carries Phosphoserine. Lys-318 carries the N6-succinyllysine modification. Phosphoserine occurs at positions 332 and 333.

The protein belongs to the LDH/MDH superfamily. MDH type 2 family. Homodimer. ISGylated. In terms of processing, acetylation at Lys-118 dramatically enhances enzymatic activity and promotes adipogenic differentiation.

The protein localises to the cytoplasm. The protein resides in the cytosol. The catalysed reaction is (S)-malate + NAD(+) = oxaloacetate + NADH + H(+). It catalyses the reaction (2R)-2-hydroxy-3-(4-hydroxyphenyl)propanoate + NAD(+) = 3-(4-hydroxyphenyl)pyruvate + NADH + H(+). It carries out the reaction (S)-2-hydroxyglutarate + NAD(+) = 2-oxoglutarate + NADH + H(+). In terms of biological role, catalyzes the reduction of aromatic alpha-keto acids in the presence of NADH. Plays essential roles in the malate-aspartate shuttle and the tricarboxylic acid cycle, important in mitochondrial NADH supply for oxidative phosphorylation. Catalyzes the reduction of 2-oxoglutarate to 2-hydroxyglutarate, leading to elevated reactive oxygen species (ROS). The sequence is that of Malate dehydrogenase, cytoplasmic (MDH1) from Felis catus (Cat).